Here is a 496-residue protein sequence, read N- to C-terminus: Aspartyl/glutamyl-tRNA(Asn/Gln) amidotransferase subunit B (496 aa).

This sequence belongs to the GatB/GatE family. GatB subfamily. As to quaternary structure, heterotrimer of A, B and C subunits.

It carries out the reaction L-glutamyl-tRNA(Gln) + L-glutamine + ATP + H2O = L-glutaminyl-tRNA(Gln) + L-glutamate + ADP + phosphate + H(+). The catalysed reaction is L-aspartyl-tRNA(Asn) + L-glutamine + ATP + H2O = L-asparaginyl-tRNA(Asn) + L-glutamate + ADP + phosphate + 2 H(+). Functionally, allows the formation of correctly charged Asn-tRNA(Asn) or Gln-tRNA(Gln) through the transamidation of misacylated Asp-tRNA(Asn) or Glu-tRNA(Gln) in organisms which lack either or both of asparaginyl-tRNA or glutaminyl-tRNA synthetases. The reaction takes place in the presence of glutamine and ATP through an activated phospho-Asp-tRNA(Asn) or phospho-Glu-tRNA(Gln). In Nitrosospira multiformis (strain ATCC 25196 / NCIMB 11849 / C 71), this protein is Aspartyl/glutamyl-tRNA(Asn/Gln) amidotransferase subunit B.